The chain runs to 396 residues: Chalcone synthase A (396 aa).

Residue Cys-170 is part of the active site.

The protein belongs to the thiolase-like superfamily. Chalcone/stilbene synthases family.

It catalyses the reaction (E)-4-coumaroyl-CoA + 3 malonyl-CoA + 3 H(+) = 2',4,4',6'-tetrahydroxychalcone + 3 CO2 + 4 CoA. Its pathway is secondary metabolite biosynthesis; flavonoid biosynthesis. The primary product of this enzyme is 4,2',4',6'-tetrahydroxychalcone (also termed naringenin-chalcone or chalcone) which can under specific conditions spontaneously isomerize into naringenin. The chain is Chalcone synthase A (CHSA) from Ipomoea purpurea (Common morning glory).